The sequence spans 71 residues: Pro-MCH (71 aa).

The first 20 residues, 1–20, serve as a signal peptide directing secretion; that stretch reads AKMSLSSYILILTLVLFSQG.

The protein belongs to the melanin-concentrating hormone family.

It localises to the secreted. The polypeptide is Pro-MCH (PMCH) (Carlito syrichta (Philippine tarsier)).